Here is a 542-residue protein sequence, read N- to C-terminus: Neutral amino acid transporter B(0) (542 aa).

M1 carries the N-acetylmethionine modification. Residues 1 to 52 (MVADPPRGDSKGLAAAEPTANGGLALASIEDQGEAAGGCCGSRDRVRRCLRA) are Cytoplasmic-facing. The helical transmembrane segment at 53–82 (NLLVLLTVVAVVVGVALGLGVSGAGGALAL) threads the bilayer. Topologically, residues 83-95 (GPERLSAFVFPGE) are extracellular. A helical membrane pass occupies residues 96 to 117 (LLLRLLRMIILPLVVCSLIGGA). Residues 118-131 (ASLDPGALGRLGAW) are Cytoplasmic-facing. Residues 132–154 (ALLFFLVTTLLASALGVALALAL) form a helical membrane-spanning segment. Residues 155-225 (QPGAASAAIN…GTRVKVPVGQ (71 aa)) lie on the Extracellular side of the membrane. N164 and N213 each carry an N-linked (GlcNAc...) asparagine glycan. A helical membrane pass occupies residues 226 to 249 (EVEGMNILGLVVFAIVFGVALRKL). At 250–258 (GPEGELLIR) the chain is on the cytoplasmic side. The chain crosses the membrane as a helical span at residues 259-286 (FFNSFNEATMVLVSWIMWYAPVGIMFLV). Topologically, residues 287 to 307 (AGKIVEMEDVGLLFARLGKYI) are extracellular. The helical transmembrane segment at 308-329 (LCCLLGHAIHGLLVLPLIYFLF) threads the bilayer. The Cytoplasmic portion of the chain corresponds to 330 to 334 (TRKNP). The segment at residues 335-365 (YRFLWGIVTPLATAFGTSSSSATLPLMMKCV) is an intramembrane region (discontinuously helical). Residues 366–374 (EENNGVAKH) are Cytoplasmic-facing. Residues 375–401 (ISRFILPIGATVNMDGAALFQCVAAVF) traverse the membrane as a helical segment. 3 residues coordinate Na(+): G383, T385, and N387. Residues 402-414 (IAQLSEQSLDFVK) lie on the Extracellular side of the membrane. Residues 415 to 448 (IITILVTATASSVGAAGIPAGGVLTLAIILEAVN) constitute an intramembrane region (discontinuously helical). The Extracellular portion of the chain corresponds to 449–461 (LPVDHISLILAVD). A helical membrane pass occupies residues 462–483 (WLVDRSCTVLNVEGDALGAGLL). Na(+)-binding residues include N472 and D476. At 484–542 (QNYVDRTEVRSTEPELIQVKSELPLDPLPAPTEEGNPLLRHYRGPAGDATVASEKESVM) the chain is on the cytoplasmic side. S494 is modified (phosphoserine). T495 is modified (phosphothreonine). S504, S536, and S540 each carry phosphoserine. The interval 509 to 542 (DPLPAPTEEGNPLLRHYRGPAGDATVASEKESVM) is disordered.

The protein belongs to the dicarboxylate/amino acid:cation symporter (DAACS) (TC 2.A.23) family. SLC1A5 subfamily. As to quaternary structure, homotrimer.

Its subcellular location is the cell membrane. The protein resides in the melanosome. It catalyses the reaction L-glutamine(out) + L-serine(in) + Na(+)(out) = L-glutamine(in) + L-serine(out) + Na(+)(in). It carries out the reaction L-glutamine(in) + L-serine(out) + Na(+)(out) = L-glutamine(out) + L-serine(in) + Na(+)(in). The enzyme catalyses L-threonine(in) + L-glutamine(out) + Na(+)(out) = L-threonine(out) + L-glutamine(in) + Na(+)(in). The catalysed reaction is L-threonine(out) + L-glutamine(in) + Na(+)(out) = L-threonine(in) + L-glutamine(out) + Na(+)(in). It catalyses the reaction L-asparagine(in) + L-glutamine(out) + Na(+)(out) = L-asparagine(out) + L-glutamine(in) + Na(+)(in). It carries out the reaction L-asparagine(out) + L-glutamine(in) + Na(+)(out) = L-asparagine(in) + L-glutamine(out) + Na(+)(in). The enzyme catalyses L-glutamine(in) + L-alanine(out) + Na(+)(out) = L-glutamine(out) + L-alanine(in) + Na(+)(in). The catalysed reaction is L-valine(out) + L-glutamine(in) + Na(+)(out) = L-valine(in) + L-glutamine(out) + Na(+)(in). It catalyses the reaction L-glutamine(in) + L-methionine(out) + Na(+)(out) = L-glutamine(out) + L-methionine(in) + Na(+)(in). It carries out the reaction L-glutamine(in) + L-glutamate(out) + Na(+)(out) + H(+)(out) = L-glutamine(out) + L-glutamate(in) + Na(+)(in) + H(+)(in). The enzyme catalyses D-serine(in) + L-glutamine(out) + Na(+)(out) = D-serine(out) + L-glutamine(in) + Na(+)(in). The catalysed reaction is D-serine(in) + L-alanine(out) + Na(+)(out) = D-serine(out) + L-alanine(in) + Na(+)(in). It catalyses the reaction nitrate(in) = nitrate(out). It carries out the reaction iodide(out) = iodide(in). The enzyme catalyses thiocyanate(in) = thiocyanate(out). In terms of biological role, sodium-coupled antiporter of neutral amino acids. In a tri-substrate transport cycle, exchanges neutral amino acids between the extracellular and intracellular compartments, coupled to the inward cotransport of at least one sodium ion. The preferred substrate is the essential amino acid L-glutamine, a precursor for biosynthesis of proteins, nucleotides and amine sugars as well as an alternative fuel for mitochondrial oxidative phosphorylation. Exchanges L-glutamine with other neutral amino acids such as L-serine, L-threonine and L-asparagine in a bidirectional way. Provides L-glutamine to proliferating stem and activated cells driving the metabolic switch toward cell differentiation. The transport cycle is usually pH-independent, with the exception of L-glutamate. Transports extracellular L-glutamate coupled to the cotransport of one proton and one sodium ion in exchange for intracellular L-glutamine counter-ion. May provide for L-glutamate uptake in glial cells regulating glutamine/glutamate cycle in the nervous system. Can transport D-amino acids. Mediates D-serine release from the retinal glia potentially affecting NMDA receptor function in retinal neurons. Displays sodium- and amino acid-dependent but uncoupled channel-like anion conductance with a preference SCN(-) &gt;&gt; NO3(-) &gt; I(-) &gt; Cl(-). Through binding of the fusogenic protein syncytin-1/ERVW-1 may mediate trophoblasts syncytialization, the spontaneous fusion of their plasma membranes, an essential process in placental development. The polypeptide is Neutral amino acid transporter B(0) (SLC1A5) (Macaca fascicularis (Crab-eating macaque)).